Consider the following 356-residue polypeptide: Putative transposase y4zB (356 aa).

Residues 1-19 (MITTGTPTTRRSAAGTAGA) show a composition bias toward low complexity. 2 disordered regions span residues 1-54 (MITT…PLAD) and 334-356 (PPPV…FAYV).

The protein belongs to the transposase 11 family.

The polypeptide is Putative transposase y4zB (Sinorhizobium fredii (strain NBRC 101917 / NGR234)).